The sequence spans 184 residues: Sec-independent protein translocase protein TatB (184 aa).

The chain crosses the membrane as a helical span at residues 1–21 (MFDIGFSELVLLFVVGLIVLG). Over residues 149–168 (AEEGEPMLEMGESDFSEDEQ) the composition is skewed to acidic residues. The disordered stretch occupies residues 149–184 (AEEGEPMLEMGESDFSEDEQATASSNETIENIKEKV).

It belongs to the TatB family. As to quaternary structure, the Tat system comprises two distinct complexes: a TatABC complex, containing multiple copies of TatA, TatB and TatC subunits, and a separate TatA complex, containing only TatA subunits. Substrates initially bind to the TatABC complex, which probably triggers association of the separate TatA complex to form the active translocon.

Its subcellular location is the cell inner membrane. Functionally, part of the twin-arginine translocation (Tat) system that transports large folded proteins containing a characteristic twin-arginine motif in their signal peptide across membranes. Together with TatC, TatB is part of a receptor directly interacting with Tat signal peptides. TatB may form an oligomeric binding site that transiently accommodates folded Tat precursor proteins before their translocation. The protein is Sec-independent protein translocase protein TatB of Histophilus somni (strain 129Pt) (Haemophilus somnus).